Reading from the N-terminus, the 382-residue chain is Galactokinase (382 aa).

34 to 37 (EHTD) contacts substrate. 124 to 130 (GAGLSSS) is a binding site for ATP. Residues Ser130 and Glu162 each coordinate Mg(2+). Asp174 acts as the Proton acceptor in catalysis. A substrate-binding site is contributed by Tyr223.

Belongs to the GHMP kinase family. GalK subfamily.

The protein resides in the cytoplasm. The catalysed reaction is alpha-D-galactose + ATP = alpha-D-galactose 1-phosphate + ADP + H(+). It participates in carbohydrate metabolism; galactose metabolism. In terms of biological role, catalyzes the transfer of the gamma-phosphate of ATP to D-galactose to form alpha-D-galactose-1-phosphate (Gal-1-P). This is Galactokinase from Salmonella agona (strain SL483).